The chain runs to 462 residues: Golgi-associated PDZ and coiled-coil motif-containing protein (462 aa).

Residues 83–194 (KAQSVSQINH…EDEALRGHIA (112 aa)) adopt a coiled-coil conformation. The PDZ domain maps to 288-371 (KVLLLKEDHE…EIEFEVVYVA (84 aa)). Residues 427–449 (TDTHENGDLGTASETPLDDGASK) are disordered.

In terms of assembly, homooligomer. Interacts with FZD5. Interacts with FZD8. Interacts with GRID2 and BECN1. Interacts with CSPG5. Interacts with CLCN3. Interacts with STX6. Interacts with CFTR. Interacts with ASIC3. Interacts with GOLGA3. Interacts with NLGN1. Interacts with RHOQ. Interacts with MARCHF2; the interaction leads to CFTR ubiquitination and degradation. May interact with CACNG2. Interacts with CCDC62.

The protein resides in the cytoplasm. It localises to the golgi apparatus membrane. The protein localises to the golgi apparatus. It is found in the trans-Golgi network membrane. Its subcellular location is the synapse. The protein resides in the postsynaptic density. It localises to the cell projection. The protein localises to the dendrite. Plays a role in intracellular protein trafficking and degradation. May regulate CFTR chloride currents and acid-induced ASIC3 currents by modulating cell surface expression of both channels. May also regulate the intracellular trafficking of the ADR1B receptor. May play a role in autophagy. Together with MARCHF2 mediates the ubiquitination and lysosomal degradation of CFTR. Overexpression results in CFTR intracellular retention and degradation in the lysosomes. The sequence is that of Golgi-associated PDZ and coiled-coil motif-containing protein (GOPC) from Pongo abelii (Sumatran orangutan).